The following is a 377-amino-acid chain: 1,3,6,8-tetrahydroxynaphthalene synthase (377 aa).

Cys-164 is a catalytic residue.

The protein belongs to the thiolase-like superfamily. Chalcone/stilbene synthases family. In terms of assembly, homodimer.

The enzyme catalyses 5 malonyl-CoA + 5 H(+) = naphthalene-1,3,6,8-tetrol + 5 CO2 + 5 CoA + H2O. It functions in the pathway pigment biosynthesis; melanin biosynthesis. Its function is as follows. Involved in the biosynthesis of melanin but also various secondary metabolites containing a naphthoquinone ring. Catalyzes the iterative condensation of five CoA-linked malonyl units to form a pentaketide intermediate. THNS subsequently catalyzes the dual intramolecular Claisen and aldol condensations of this linear intermediate to produce the fused ring of 1,3,6,8-tetrahydroxynaphthalene (THN). This is 1,3,6,8-tetrahydroxynaphthalene synthase from Streptomyces peucetius subsp. caesius.